The chain runs to 354 residues: Inactive ADP-ribosyltransferase ARH2 (354 aa).

Ser27 carries the post-translational modification Phosphoserine.

Belongs to the ADP-ribosylglycohydrolase family.

The protein resides in the cytoplasm. It is found in the myofibril. The protein localises to the sarcomere. In terms of biological role, required for myofibril assembly and outgrowth of the cardiac chambers in the developing heart. Appears to be catalytically inactive, showing no activity against O-acetyl-ADP-ribose. The protein is Inactive ADP-ribosyltransferase ARH2 (ADPRHL1) of Bos taurus (Bovine).